We begin with the raw amino-acid sequence, 298 residues long: N-acetylmuramic acid 6-phosphate etherase (298 aa).

An SIS domain is found at 57–220 (IAAAFGKGGR…STGAMIRTGK (164 aa)). Catalysis depends on E85, which acts as the Proton donor. The active site involves E116.

The protein belongs to the GCKR-like family. MurNAc-6-P etherase subfamily. In terms of assembly, homodimer.

The enzyme catalyses N-acetyl-D-muramate 6-phosphate + H2O = N-acetyl-D-glucosamine 6-phosphate + (R)-lactate. The protein operates within amino-sugar metabolism; 1,6-anhydro-N-acetylmuramate degradation. Its pathway is amino-sugar metabolism; N-acetylmuramate degradation. It functions in the pathway cell wall biogenesis; peptidoglycan recycling. Functionally, specifically catalyzes the cleavage of the D-lactyl ether substituent of MurNAc 6-phosphate, producing GlcNAc 6-phosphate and D-lactate. Together with AnmK, is also required for the utilization of anhydro-N-acetylmuramic acid (anhMurNAc) either imported from the medium or derived from its own cell wall murein, and thus plays a role in cell wall recycling. The polypeptide is N-acetylmuramic acid 6-phosphate etherase (Aeromonas hydrophila subsp. hydrophila (strain ATCC 7966 / DSM 30187 / BCRC 13018 / CCUG 14551 / JCM 1027 / KCTC 2358 / NCIMB 9240 / NCTC 8049)).